The chain runs to 405 residues: Acetate kinase (405 aa).

Mg(2+) is bound at residue Asn7. Residue Lys14 participates in ATP binding. Arg99 provides a ligand contact to substrate. Residue Asp156 is the Proton donor/acceptor of the active site. Position 215-219 (215-219 (HLGNG)) interacts with ATP. Glu391 serves as a coordination point for Mg(2+).

The protein belongs to the acetokinase family. As to quaternary structure, homodimer. Mg(2+) is required as a cofactor. Requires Mn(2+) as cofactor.

It localises to the cytoplasm. The enzyme catalyses acetate + ATP = acetyl phosphate + ADP. Its pathway is metabolic intermediate biosynthesis; acetyl-CoA biosynthesis; acetyl-CoA from acetate: step 1/2. In terms of biological role, catalyzes the formation of acetyl phosphate from acetate and ATP. Can also catalyze the reverse reaction. In Nostoc sp. (strain PCC 7120 / SAG 25.82 / UTEX 2576), this protein is Acetate kinase.